A 75-amino-acid polypeptide reads, in one-letter code: U6-lycotoxin-Ls1h (75 aa).

Positions 1 to 21 (MKLLLFTALVLVVISLIEVEA) are cleaved as a signal peptide. Residues 22–25 (ENER) constitute a propeptide that is removed on maturation.

This sequence belongs to the neurotoxin 19 (CSTX) family. 06 (U6-Lctx) subfamily. In terms of processing, contains 4 disulfide bonds. As to expression, expressed by the venom gland.

It localises to the secreted. This is U6-lycotoxin-Ls1h from Lycosa singoriensis (Wolf spider).